Consider the following 341-residue polypeptide: Anthranilate phosphoribosyltransferase (341 aa).

Residues glycine 83, 86-87, threonine 91, 93-96, 111-119, and serine 123 contribute to the 5-phospho-alpha-D-ribose 1-diphosphate site; these read GD, NIST, and KHGNRGVSS. Glycine 83 serves as a coordination point for anthranilate. Serine 95 serves as a coordination point for Mg(2+). Asparagine 114 provides a ligand contact to anthranilate. Arginine 169 is an anthranilate binding site. Mg(2+) contacts are provided by aspartate 228 and glutamate 229.

It belongs to the anthranilate phosphoribosyltransferase family. Homodimer. Requires Mg(2+) as cofactor.

It carries out the reaction N-(5-phospho-beta-D-ribosyl)anthranilate + diphosphate = 5-phospho-alpha-D-ribose 1-diphosphate + anthranilate. Its pathway is amino-acid biosynthesis; L-tryptophan biosynthesis; L-tryptophan from chorismate: step 2/5. Functionally, catalyzes the transfer of the phosphoribosyl group of 5-phosphorylribose-1-pyrophosphate (PRPP) to anthranilate to yield N-(5'-phosphoribosyl)-anthranilate (PRA). This chain is Anthranilate phosphoribosyltransferase, found in Cupriavidus necator (strain ATCC 17699 / DSM 428 / KCTC 22496 / NCIMB 10442 / H16 / Stanier 337) (Ralstonia eutropha).